A 560-amino-acid polypeptide reads, in one-letter code: Dihydroxy-acid dehydratase (560 aa).

The interval 1–20 is disordered; sequence MGDNLKKRSSMTTDGDNRAP. Cys52 provides a ligand contact to [2Fe-2S] cluster. A Mg(2+)-binding site is contributed by Asp84. Residue Cys125 coordinates [2Fe-2S] cluster. Mg(2+)-binding residues include Asp126 and Lys127. Lys127 carries the N6-carboxylysine modification. Cys197 is a binding site for [2Fe-2S] cluster. A Mg(2+)-binding site is contributed by Glu448. Residue Ser474 is the Proton acceptor of the active site.

It belongs to the IlvD/Edd family. Homodimer. [2Fe-2S] cluster is required as a cofactor. It depends on Mg(2+) as a cofactor.

It carries out the reaction (2R)-2,3-dihydroxy-3-methylbutanoate = 3-methyl-2-oxobutanoate + H2O. The enzyme catalyses (2R,3R)-2,3-dihydroxy-3-methylpentanoate = (S)-3-methyl-2-oxopentanoate + H2O. It functions in the pathway amino-acid biosynthesis; L-isoleucine biosynthesis; L-isoleucine from 2-oxobutanoate: step 3/4. The protein operates within amino-acid biosynthesis; L-valine biosynthesis; L-valine from pyruvate: step 3/4. In terms of biological role, functions in the biosynthesis of branched-chain amino acids. Catalyzes the dehydration of (2R,3R)-2,3-dihydroxy-3-methylpentanoate (2,3-dihydroxy-3-methylvalerate) into 2-oxo-3-methylpentanoate (2-oxo-3-methylvalerate) and of (2R)-2,3-dihydroxy-3-methylbutanoate (2,3-dihydroxyisovalerate) into 2-oxo-3-methylbutanoate (2-oxoisovalerate), the penultimate precursor to L-isoleucine and L-valine, respectively. This Leptospira interrogans serogroup Icterohaemorrhagiae serovar Lai (strain 56601) protein is Dihydroxy-acid dehydratase.